Here is a 525-residue protein sequence, read N- to C-terminus: Potassium voltage-gated channel subfamily A member 3 (525 aa).

The segment at 1–23 (MTVVPGDHLLEPEAAGGGGGDPP) is disordered. Residues 1–184 (MTVVPGDHLL…EYPESSGPAR (184 aa)) lie on the Cytoplasmic side of the membrane. A helical membrane pass occupies residues 185-203 (GIAIVSVLVILISIVIFCL). The Extracellular portion of the chain corresponds to 204–244 (ETLPEFRDEKDYPASPSQDVFEAANNSTSGASSGASSFSDP). The N-linked (GlcNAc...) asparagine glycan is linked to Asn-229. A helical transmembrane segment spans residues 245–266 (FFVVETLCIIWFSFELLVRFFA). Residue Cys-267 is the site of S-palmitoyl cysteine attachment. Over 267 to 277 (CPSKATFSRNI) the chain is Cytoplasmic. Residues 278-298 (MNLIDIVAIIPYFITLGTELA) form a helical membrane-spanning segment. Residues 299–312 (ERQGNGQQAMSLAI) lie on the Extracellular side of the membrane. Residues 313-331 (LRVIRLVRVFRIFKLSRHS) traverse the membrane as a helical; Voltage-sensor segment. Over 332-347 (KGLQILGQTLKASMRE) the chain is Cytoplasmic. The helical transmembrane segment at 348 to 367 (LGLLIFFLFIGVILFSSAVY) threads the bilayer. Topologically, residues 368–408 (FAEADDPSSGFNSIPDAFWWAVVTMTTVGYGDMHPVTIGGK) are extracellular. Residues 394 to 399 (TVGYGD) carry the Selectivity filter motif. The helical transmembrane segment at 409–431 (IVGSLCAIAGVLTIALPVPVIVS) threads the bilayer. Over 432 to 525 (NFNYFYHRET…VNIKKIFTDV (94 aa)) the chain is Cytoplasmic. The interaction with KCNE4 stretch occupies residues 432-525 (NFNYFYHRET…VNIKKIFTDV (94 aa)). A Phosphotyrosine modification is found at Tyr-449. Ser-470 is subject to Phosphoserine; by PKA. Positions 523–525 (TDV) match the PDZ-binding motif.

It belongs to the potassium channel family. A (Shaker) (TC 1.A.1.2) subfamily. Kv1.3/KCNA3 sub-subfamily. As to quaternary structure, homotetramer. Forms heterooligomers with KCNE4 which inhibits KCNA3 activity by impairing localization to the cell membrane. The stoichiometry of KCNA3 and KCNE4 in the heterooligomers are 4:1, 4:2, 4:3 or 4:4 respectively. Increasing the number of KCNE4 subunits steadily slows the activation KCNA3 and decreases its abundance at the cell membrane. However, a single subunit of KCNE4 is sufficient for the cooperative enhancement of the inactivating function of the channel. Interacts with SEC24D; this interaction is reduced in the presence of KCNE4. Interacts with DLG1, DLG2 and DLG4 via their PDZ domains. Post-translationally, phosphorylation on Tyr-449 inhibits its channel activity. N-glycosylation promotes the cell surface expression.

It localises to the cell membrane. The enzyme catalyses K(+)(in) = K(+)(out). Its activity is regulated as follows. Activity is up-regulated by JAK2. Functionally, mediates the voltage-dependent potassium ion permeability of excitable membranes. Assuming opened or closed conformations in response to the voltage difference across the membrane, the protein forms a potassium-selective channel through which potassium ions may pass in accordance with their electrochemical gradient. The sequence is that of Potassium voltage-gated channel subfamily A member 3 (Kcna3) from Rattus norvegicus (Rat).